Here is a 285-residue protein sequence, read N- to C-terminus: Vacuolar protein sorting-associated protein 37B (285 aa).

The interaction with IST1 stretch occupies residues A50 to P170. The VPS37 C-terminal domain occupies F84–G173. Disordered stretches follow at residues Q167 to P215 and P242 to Q285. Composition is skewed to pro residues over residues G173–S184 and R206–P215. Residues P250–L259 are compositionally biased toward polar residues. A compositionally biased stretch (pro residues) spans P262–M275. Positions A276–Q285 are enriched in low complexity.

It belongs to the VPS37 family. In terms of assembly, component of the ESCRT-I complex (endosomal sorting complex required for transport I) which consists of TSG101, VPS28, a VPS37 protein (VPS37A to -D) and MVB12A or MVB12B in a 1:1:1:1 stoichiometry. Interacts with TSG101, VPS28, MVB12A and MVB12B. Component of the ESCRT-I complex (endosomal sorting complex required for transport I) which consists of TSG101, VPS28, a VPS37 protein (VPS37A to -D) and UBAP1 in a 1:1:1:1 stoichiometry. Interacts with CEP55. Interacts with IST1.

It is found in the late endosome membrane. Functionally, component of the ESCRT-I complex, a regulator of vesicular trafficking process. Required for the sorting of endocytic ubiquitinated cargos into multivesicular bodies. May be involved in cell growth and differentiation. This chain is Vacuolar protein sorting-associated protein 37B (Vps37b), found in Mus musculus (Mouse).